A 258-amino-acid chain; its full sequence is Putative ankyrin repeat domain-containing protein 30B-like (258 aa).

The segment at 1–21 is disordered; it reads MERLSAAPVKGQTGPERPSPF. ANK repeat units lie at residues 71 to 100, 104 to 133, 137 to 166, and 170 to 199; these read KKRT…QLDV, ENRT…DPNI, YGNT…DIEV, and AGHT…NANA. The segment at 216–258 is disordered; that stretch reads KISKNSQNSNPEGTSEGTPDEAAPLAERTPDTAESLVERTPDE. Polar residues predominate over residues 218–232; it reads SKNSQNSNPEGTSEG. The segment covering 243-258 has biased composition (basic and acidic residues); sequence RTPDTAESLVERTPDE.

The sequence is that of Putative ankyrin repeat domain-containing protein 30B-like (ANKRD30BL) from Homo sapiens (Human).